Here is a 428-residue protein sequence, read N- to C-terminus: Elongation factor 1-alpha (428 aa).

Residues 5 to 225 (KPILNVAFIG…DAFQPPEKPT (221 aa)) enclose the tr-type G domain. The G1 stretch occupies residues 14-21 (GHVDAGKS). 14–21 (GHVDAGKS) serves as a coordination point for GTP. Mg(2+) is bound at residue Ser-21. Residues 70–74 (GVTID) form a G2 region. A G3 region spans residues 91–94 (DCPG). GTP contacts are provided by residues 91-95 (DCPGH) and 149-152 (NKMD). The segment at 149–152 (NKMD) is G4. The tract at residues 189–191 (ASL) is G5.

Belongs to the TRAFAC class translation factor GTPase superfamily. Classic translation factor GTPase family. EF-Tu/EF-1A subfamily.

Its subcellular location is the cytoplasm. It carries out the reaction GTP + H2O = GDP + phosphate + H(+). In terms of biological role, GTP hydrolase that promotes the GTP-dependent binding of aminoacyl-tRNA to the A-site of ribosomes during protein biosynthesis. The polypeptide is Elongation factor 1-alpha (Methanococcus maripaludis (strain C6 / ATCC BAA-1332)).